Consider the following 230-residue polypeptide: MWAWALLPICLTIWATAGIWIVYGMSVSNGSVNLTDGFPFISLCGTYPPQSCVFGQVLNVGAMLGVWISVIRFQQIRDYGCHSVLNSVSLAMGLLCALGTSIVGNFQQSNQLETHLAGAFLAFVIGNIYFWMQTVLTYMVKPKHGGCYIGPIRFCLSVACTALIVLMAVFLKLNMKSISAICEWIVAMILFLLYGLFSVDFWHLDGHYFHVKKRTAIPNEVEVSTVTLNI.

Residue Met-1 is a topological domain, cytoplasmic. The chain crosses the membrane as a helical span at residues Trp-2–Val-22. The Extracellular segment spans residues Tyr-23–Gln-50. Residues Asn-29 and Asn-33 are each glycosylated (N-linked (GlcNAc...) asparagine). The helical transmembrane segment at Ser-51–Ile-71 threads the bilayer. The Cytoplasmic segment spans residues Arg-72–Ser-83. A helical membrane pass occupies residues Val-84–Gly-104. The Extracellular portion of the chain corresponds to Asn-105–His-115. A helical transmembrane segment spans residues Leu-116–Leu-136. The Cytoplasmic portion of the chain corresponds to Thr-137 to Gly-150. A helical membrane pass occupies residues Pro-151 to Leu-171. The Extracellular segment spans residues Lys-172 to Glu-183. Residues Trp-184–Leu-204 form a helical membrane-spanning segment. The Cytoplasmic segment spans residues Asp-205–Ile-230.

It belongs to the DRAM/TMEM150 family.

Its subcellular location is the cell membrane. The protein localises to the endosome membrane. The protein resides in the cytoplasmic vesicle. It is found in the autophagosome membrane. Functionally, modulator of macroautophagy that causes accumulation of autophagosomes under basal conditions and enhances autophagic flux. Represses cell death and promotes long-term clonogenic survival of cells grown in the absence of glucose in a macroautophagy-independent manner. May have some role in extracellular matrix engulfment or growth factor receptor recycling, both of which can modulate cell survival. This is Modulator of macroautophagy TMEM150B from Xenopus tropicalis (Western clawed frog).